The sequence spans 179 residues: MKSSLKPVEKYAYSIFEIAKEEKKLDLYKHNLETINSIIEEVPAFFEAVGDPARDRNERKQIVIKNLEGEIDIYLISLIDLLIDVKSVKLLKKIVLKALDFVNEALSVKKVLITTAYELTKNQIDRLLQSLKKKYVCEKIEPIVVVDKSIIGGLSINFESQVLDNSLKTKLFNIVKKVN.

The protein belongs to the ATPase delta chain family. As to quaternary structure, F-type ATPases have 2 components, F(1) - the catalytic core - and F(0) - the membrane proton channel. F(1) has five subunits: alpha(3), beta(3), gamma(1), delta(1), epsilon(1). F(0) has three main subunits: a(1), b(2) and c(10-14). The alpha and beta chains form an alternating ring which encloses part of the gamma chain. F(1) is attached to F(0) by a central stalk formed by the gamma and epsilon chains, while a peripheral stalk is formed by the delta and b chains.

The protein localises to the cell membrane. Functionally, f(1)F(0) ATP synthase produces ATP from ADP in the presence of a proton or sodium gradient. F-type ATPases consist of two structural domains, F(1) containing the extramembraneous catalytic core and F(0) containing the membrane proton channel, linked together by a central stalk and a peripheral stalk. During catalysis, ATP synthesis in the catalytic domain of F(1) is coupled via a rotary mechanism of the central stalk subunits to proton translocation. Its function is as follows. This protein is part of the stalk that links CF(0) to CF(1). It either transmits conformational changes from CF(0) to CF(1) or is implicated in proton conduction. This Ureaplasma parvum serovar 3 (strain ATCC 27815 / 27 / NCTC 11736) protein is ATP synthase subunit delta.